Here is a 527-residue protein sequence, read N- to C-terminus: Cytochrome P450 monooxyhenase eriA (527 aa).

A helical transmembrane segment spans residues 17–37 (LGVVDLSLLGVGAVIAFAWLF). 3 N-linked (GlcNAc...) asparagine glycosylation sites follow: asparagine 77, asparagine 274, and asparagine 297. Cysteine 453 contacts heme.

Belongs to the cytochrome P450 family. Requires heme as cofactor.

It is found in the membrane. The enzyme catalyses cyathadiol + reduced [NADPH--hemoprotein reductase] + O2 = cyathatriol + oxidized [NADPH--hemoprotein reductase] + H2O + H(+). It participates in secondary metabolite biosynthesis. Functionally, cytochrome P450 monooxygenase; part of the gene cluster that mediates the biosynthesis of erinacines, cyathane-xylosides that show unique biological activities, including leishmanicidal activity, stimulating activity for nerve growth-factor synthesis, and agonistic activity toward the kappa opioid receptor. Within the pathway, eriA catalyzes C-11 hydroxylation in the presence of the short chain dehydrogenase/reductase (SDR) eriH, which leads to the production of cyathatriol. The first step of the erinacines biosynthesis pathway is catalyzed by the geranylgeranyl diphosphate (GGPP) synthase eriE via conversion of farnesyl pyrophosphate and isopentyl pyrophosphate into geranylgeranyl pyrophosphate (GGPP). GGPP is then substrate of the diterpene cyclase eriG for the production of cyatha-3,12-diene. The cytochrome P450 monooxygenase eriI then hydroxylates cyatha-3,12-diene at C-14 of the seven-membered ring to produce erinacol, which is further hydroxylated at C-15 by the cytochrome P450 monooxygenase eriC to yield cyathadiol. The cytochrome P450 monooxygenase eriA then catalyzes C-11 hydroxylation in the presence of the short chain dehydrogenase/reductase (SDR) eriH, which leads to the production of cyathatriol. The acetyltransferase eriL converts cyathatriol into 11-O-acetyl-cyathatriol. The SDR eriH catalyzes further oxidation of 11-O-acetyl-cyathatriol into 1-O-acetylcyathin A3. Finally, the glycosyl transferase eriJ tranfers xylose from UDP-xylose onto C-14 of 11-O-acetyl-cyathatriol to form eracine Q. EriJ is also able to convert 11-O-acetyl-cyathatriol to eracine Q2 by using UDP-D-glucose as cosubstrate, but at a lower rate. The chain is Cytochrome P450 monooxyhenase eriA from Hericium erinaceus (Lion's mane mushroom).